We begin with the raw amino-acid sequence, 327 residues long: GTPase Obg (327 aa).

The Obg domain maps to 1–159 (MQFIDQANII…WEVQLELKLL (159 aa)). The region spanning 160-327 (AEVGIIGLPN…SLLSEVWNRI (168 aa)) is the OBG-type G domain. Residues 166–173 (GLPNAGKS), 191–195 (FTTLI), 213–216 (DIPG), 280–283 (NKKE), and 309–311 (SSA) contribute to the ATP site. Residues S173 and T193 each coordinate Mg(2+).

Belongs to the TRAFAC class OBG-HflX-like GTPase superfamily. OBG GTPase family. As to quaternary structure, monomer. Mg(2+) serves as cofactor.

The protein resides in the cytoplasm. In terms of biological role, an essential GTPase which binds GTP, GDP and possibly (p)ppGpp with moderate affinity, with high nucleotide exchange rates and a fairly low GTP hydrolysis rate. Plays a role in control of the cell cycle, stress response, ribosome biogenesis and in those bacteria that undergo differentiation, in morphogenesis control. In Prochlorococcus marinus (strain MIT 9515), this protein is GTPase Obg.